We begin with the raw amino-acid sequence, 257 residues long: 5-oxoprolinase subunit A (257 aa).

Belongs to the LamB/PxpA family. Forms a complex composed of PxpA, PxpB and PxpC.

It carries out the reaction 5-oxo-L-proline + ATP + 2 H2O = L-glutamate + ADP + phosphate + H(+). Functionally, catalyzes the cleavage of 5-oxoproline to form L-glutamate coupled to the hydrolysis of ATP to ADP and inorganic phosphate. This is 5-oxoprolinase subunit A from Pectobacterium atrosepticum (strain SCRI 1043 / ATCC BAA-672) (Erwinia carotovora subsp. atroseptica).